The sequence spans 374 residues: MVLADGQMIWGRGFGATGAKVGEVCFHTAMTGYEEIMTDPSFASQIINFTFPHIGNVGANREDVEAKTLHALGCIVREDVTAPSNFRSLWRFDSWLKDHDRIGLAGVDTRALTGLLRKKGAQNAVIAHDPKGQFDIPALIETARSWAGLQGMDLARSVSTHQSYNWQEGIWSLQNGYSVVDNQKGPHVVAIDYGLKHNILRNLVEAGARVTVVKATASFDEVMAHKPDGVFLSNGPGDPAATAEYAVPVIRQLLDIKMPIFGICLGHQLLALAVGATTYKMHQGHRGANHPVKRLDDSKVEITSMNHGFAVATDSLPEQARPTHLSLFDGSLAGLELTDRPAFSVQYHPEASPGPQDSYYLFTKFIDLIAKERP.

Positions methionine 1 to glutamine 183 are CPSase. Residues serine 41, glycine 235, and glycine 237 each coordinate L-glutamine. A Glutamine amidotransferase type-1 domain is found at histidine 187–proline 374. Cysteine 264 acts as the Nucleophile in catalysis. The L-glutamine site is built by leucine 265, glutamine 268, asparagine 306, glycine 308, and phenylalanine 309. Active-site residues include histidine 348 and glutamate 350.

This sequence belongs to the CarA family. Composed of two chains; the small (or glutamine) chain promotes the hydrolysis of glutamine to ammonia, which is used by the large (or ammonia) chain to synthesize carbamoyl phosphate. Tetramer of heterodimers (alpha,beta)4.

It carries out the reaction hydrogencarbonate + L-glutamine + 2 ATP + H2O = carbamoyl phosphate + L-glutamate + 2 ADP + phosphate + 2 H(+). It catalyses the reaction L-glutamine + H2O = L-glutamate + NH4(+). It participates in amino-acid biosynthesis; L-arginine biosynthesis; carbamoyl phosphate from bicarbonate: step 1/1. The protein operates within pyrimidine metabolism; UMP biosynthesis via de novo pathway; (S)-dihydroorotate from bicarbonate: step 1/3. Its function is as follows. Small subunit of the glutamine-dependent carbamoyl phosphate synthetase (CPSase). CPSase catalyzes the formation of carbamoyl phosphate from the ammonia moiety of glutamine, carbonate, and phosphate donated by ATP, constituting the first step of 2 biosynthetic pathways, one leading to arginine and/or urea and the other to pyrimidine nucleotides. The small subunit (glutamine amidotransferase) binds and cleaves glutamine to supply the large subunit with the substrate ammonia. This is Carbamoyl phosphate synthase small chain from Zymomonas mobilis subsp. mobilis (strain ATCC 31821 / ZM4 / CP4).